The following is a 434-amino-acid chain: Serine hydroxymethyltransferase (434 aa).

Residues leucine 124 and 128 to 130 (GHL) contribute to the (6S)-5,6,7,8-tetrahydrofolate site. At lysine 233 the chain carries N6-(pyridoxal phosphate)lysine. Position 249 (glutamate 249) interacts with (6S)-5,6,7,8-tetrahydrofolate.

It belongs to the SHMT family. Homodimer. Pyridoxal 5'-phosphate is required as a cofactor.

The protein resides in the cytoplasm. It catalyses the reaction (6R)-5,10-methylene-5,6,7,8-tetrahydrofolate + glycine + H2O = (6S)-5,6,7,8-tetrahydrofolate + L-serine. Its pathway is one-carbon metabolism; tetrahydrofolate interconversion. It functions in the pathway amino-acid biosynthesis; glycine biosynthesis; glycine from L-serine: step 1/1. Its function is as follows. Catalyzes the reversible interconversion of serine and glycine with tetrahydrofolate (THF) serving as the one-carbon carrier. This reaction serves as the major source of one-carbon groups required for the biosynthesis of purines, thymidylate, methionine, and other important biomolecules. Also exhibits THF-independent aldolase activity toward beta-hydroxyamino acids, producing glycine and aldehydes, via a retro-aldol mechanism. The protein is Serine hydroxymethyltransferase of Synechococcus sp. (strain JA-3-3Ab) (Cyanobacteria bacterium Yellowstone A-Prime).